A 311-amino-acid polypeptide reads, in one-letter code: Homeobox-leucine zipper protein HOX13 (311 aa).

A disordered region spans residues 1–74 (MKRPTSSSRK…PSCGLGEKKR (74 aa)). Positions 35-54 (DEAEMEEVDEEEEEEVDEDM) are enriched in acidic residues. A DNA-binding region (homeobox) is located at residues 69–128 (LGEKKRRLALEQVRALERSFDTDNKLDPDRKARIARDLGLQPRQVAVWFQNRRARWKTKQ). Residues 127-171 (KQLERDFAALRARHDALRADCDALRRDKDALAAEIRELREKLPTK) form a leucine-zipper region.

The protein belongs to the HD-ZIP homeobox family. Class I subfamily. Expressed in seedlings, roots, stems, leaf sheaths and blades and panicles.

The protein localises to the nucleus. Its function is as follows. Probable transcription factor. This Oryza sativa subsp. japonica (Rice) protein is Homeobox-leucine zipper protein HOX13 (HOX13).